Consider the following 908-residue polypeptide: Protein translocase subunit SecA (908 aa).

Residues Gln-87, 105–109 (GEGKT), and Asp-512 each bind ATP. Residues 866-908 (GSDEDDAIAAHTPMIRDGDKVGRNDPCPCGSGRKYKQCHGKLS) are disordered. Positions 879-888 (MIRDGDKVGR) are enriched in basic and acidic residues. The Zn(2+) site is built by Cys-892, Cys-894, Cys-903, and His-904. Residues 898 to 908 (RKYKQCHGKLS) are compositionally biased toward basic residues.

It belongs to the SecA family. In terms of assembly, monomer and homodimer. Part of the essential Sec protein translocation apparatus which comprises SecA, SecYEG and auxiliary proteins SecDF-YajC and YidC. Zn(2+) serves as cofactor.

Its subcellular location is the cell inner membrane. The protein resides in the cytoplasm. The catalysed reaction is ATP + H2O + cellular proteinSide 1 = ADP + phosphate + cellular proteinSide 2.. In terms of biological role, part of the Sec protein translocase complex. Interacts with the SecYEG preprotein conducting channel. Has a central role in coupling the hydrolysis of ATP to the transfer of proteins into and across the cell membrane, serving both as a receptor for the preprotein-SecB complex and as an ATP-driven molecular motor driving the stepwise translocation of polypeptide chains across the membrane. The sequence is that of Protein translocase subunit SecA from Shewanella oneidensis (strain ATCC 700550 / JCM 31522 / CIP 106686 / LMG 19005 / NCIMB 14063 / MR-1).